The primary structure comprises 277 residues: Serine protease 33 (277 aa).

An N-terminal signal peptide occupies residues 1 to 24 (MRGASHLQILLLLVLGTRMQECAA). One can recognise a Peptidase S1 domain in the interval 34-276 (IVGGRDAQDG…YSPWIQARLS (243 aa)). Cys-59 and Cys-75 form a disulfide bridge. Residues His-74 and Asp-123 each act as charge relay system in the active site. 3 cysteine pairs are disulfide-bonded: Cys-157–Cys-234, Cys-190–Cys-213, and Cys-224–Cys-252. Ser-228 (charge relay system) is an active-site residue.

The protein belongs to the peptidase S1 family. Not glycosylated. As to expression, widely expressed.

It is found in the secreted. Its function is as follows. Serine protease that has amidolytic activity, cleaving its substrates before Arg residues. This chain is Serine protease 33 (Prss33), found in Mus musculus (Mouse).